A 67-amino-acid chain; its full sequence is uncharacterized protein (67 aa).

The chain crosses the membrane as a helical span at residues 26-46; it reads CYLLFCFLECFLNLFKKCGVF.

This sequence belongs to the plectrovirus ORF11 family.

The protein resides in the host membrane. This is an uncharacterized protein from Spiroplasma virus SpV1-C74 (SpV1).